The following is a 426-amino-acid chain: MINPWSSSDFFDYERLKKEFGISDQSDNIDHFLFRRKVILGQRGFEYIKYAIDNKIKFNVMTGLMPSGEMHLGNKSAIDQVIYFQKLGGSVSIAVADLESYSTRGIPLDKAREIAIEKYILNYIAMGLQPCEIYFQSKNKDVQFLSYILGNWTNMNELKALYGFTDSNDILHINAPLIQAADVLHTQLNNYGGPAPTVVPVGFDQDPHIRLMRDLAKRMRIFNVFYDGGITVSIKGKGDSTMPVDQAYEYLSKRFSEVTKDYEYRVVKAKDGKEEDIVRTDIDLAKIGSEFNVFSFIPPSATYQKLMKGLKGGKMSSSVPDSLISMNDDVEEAKRKIMRALTGGRDTEEEQRKLGGEPEKCPVFDLYNYEIDDDKYVNEVFEECKSGKRMCGYCKREIADKMSIFLKDIKEKREIAREKLSLYIHE.

Positions 66 to 74 (PSGEMHLGN) match the 'HIGH' region motif. The 'KMSKS' region motif lies at 314 to 318 (KMSSS).

The protein belongs to the class-I aminoacyl-tRNA synthetase family.

The protein localises to the cytoplasm. The catalysed reaction is tRNA(Trp) + L-tryptophan + ATP = L-tryptophyl-tRNA(Trp) + AMP + diphosphate + H(+). In Thermoplasma volcanium (strain ATCC 51530 / DSM 4299 / JCM 9571 / NBRC 15438 / GSS1), this protein is Tryptophan--tRNA ligase.